Reading from the N-terminus, the 265-residue chain is Cytochrome c oxidase subunit 3 (265 aa).

6 helical membrane passes run Pro16–Met36, Gly41–Trp61, Tyr84–Ser104, Ala162–Met182, Phe200–Val220, and Trp245–Ile265.

The protein belongs to the cytochrome c oxidase subunit 3 family. In terms of assembly, component of the cytochrome c oxidase (complex IV, CIV), a multisubunit enzyme composed of a catalytic core of 3 subunits and several supernumerary subunits. The complex exists as a monomer or a dimer and forms supercomplexes (SCs) in the inner mitochondrial membrane with ubiquinol-cytochrome c oxidoreductase (cytochrome b-c1 complex, complex III, CIII).

It is found in the mitochondrion inner membrane. The catalysed reaction is 4 Fe(II)-[cytochrome c] + O2 + 8 H(+)(in) = 4 Fe(III)-[cytochrome c] + 2 H2O + 4 H(+)(out). Functionally, component of the cytochrome c oxidase, the last enzyme in the mitochondrial electron transport chain which drives oxidative phosphorylation. The respiratory chain contains 3 multisubunit complexes succinate dehydrogenase (complex II, CII), ubiquinol-cytochrome c oxidoreductase (cytochrome b-c1 complex, complex III, CIII) and cytochrome c oxidase (complex IV, CIV), that cooperate to transfer electrons derived from NADH and succinate to molecular oxygen, creating an electrochemical gradient over the inner membrane that drives transmembrane transport and the ATP synthase. Cytochrome c oxidase is the component of the respiratory chain that catalyzes the reduction of oxygen to water. Electrons originating from reduced cytochrome c in the intermembrane space (IMS) are transferred via the dinuclear copper A center (CU(A)) of subunit 2 and heme A of subunit 1 to the active site in subunit 1, a binuclear center (BNC) formed by heme A3 and copper B (CU(B)). The BNC reduces molecular oxygen to 2 water molecules using 4 electrons from cytochrome c in the IMS and 4 protons from the mitochondrial matrix. This Aegilops columnaris (Goatgrass) protein is Cytochrome c oxidase subunit 3 (COX3).